A 970-amino-acid polypeptide reads, in one-letter code: uncharacterized protein (970 aa).

The chain crosses the membrane as a helical span at residues 12-32 (VIFFSVFFVIFFLFIESSVGF).

This sequence to E.coli YtfN.

The protein localises to the membrane. This is an uncharacterized protein from Buchnera aphidicola subsp. Acyrthosiphon pisum (strain APS) (Acyrthosiphon pisum symbiotic bacterium).